A 1481-amino-acid polypeptide reads, in one-letter code: Cystic fibrosis transmembrane conductance regulator (1481 aa).

The Cytoplasmic segment spans residues 1 to 77 (MQRSPLEKAS…KLINALRRCF (77 aa)). Residues 78–98 (FWRFMFYGILLYLGEVTKAVQ) form a helical membrane-spanning segment. The ABC transmembrane type-1 1 domain maps to 81–365 (FMFYGILLYL…WAVQTWYDSL (285 aa)). Residues 99–122 (PLLLGRIIASYDPDNKVERSIAIY) are Extracellular-facing. The chain crosses the membrane as a helical span at residues 123-146 (LGIGLCLLFIVRMLLLHPAIFGLH). The Cytoplasmic segment spans residues 147 to 195 (HIGMQMRIAMFSLIYKKILKLSSRVLDKISIGQLVSLLSNNLNKFDEGL). Residues 196-216 (ALAHFVWIAPLQVMLLMGLLW) traverse the membrane as a helical segment. Residues 217–222 (ELLQAS) lie on the Extracellular side of the membrane. A helical membrane pass occupies residues 223-243 (AFCGLGFLIVLALFQSGLGRM). Residues 244-298 (MMKYRDQRAGKINERLVITSEMIENIQSVKAYCWEEAMEKMIENLRQTELKLTRK) are Cytoplasmic-facing. A helical membrane pass occupies residues 299–319 (AAYVRYFNSSAFFFSGFFVVF). The Extracellular segment spans residues 320–339 (LSVLPYALIKGIILRKIFTT). A helical transmembrane segment spans residues 340–358 (ISFCIVLRMAVTRQFPWAV). Residues 359 to 858 (QTWYDSLGAI…YLRYITVHKS (500 aa)) are Cytoplasmic-facing. ATP is bound by residues Trp-401, 458–465 (GSTGAGKT), and Gln-493. The region spanning 423-646 (NGDNSLFFSN…RPDFSSKLMG (224 aa)) is the ABC transporter 1 domain. Cys-524 carries the S-palmitoyl cysteine lipid modification. 2 positions are modified to phosphoserine: Ser-549 and Ser-660. Positions 654–831 (SAERRNSILT…EEINEEDLKE (178 aa)) are disordered R region. Position 670 is a phosphoserine; by PKA (Ser-670). Phosphoserine is present on Ser-686. Lys-688 participates in a covalent cross-link: Glycyl lysine isopeptide (Lys-Gly) (interchain with G-Cter in ubiquitin). Phosphoserine is present on residues Ser-700 and Ser-712. Thr-717 is subject to Phosphothreonine. 5 positions are modified to phosphoserine: Ser-737, Ser-768, Ser-790, Ser-795, and Ser-813. Residues 859–879 (LIFVLIWCLVIFLAEVAVSLV) form a helical membrane-spanning segment. The 297-residue stretch at 859 to 1155 (LIFVLIWCLV…AVNSSIDVDS (297 aa)) folds into the ABC transmembrane type-1 2 domain. Residues 880–918 (LLWLLGNAPAYNKGNSTISANSSYAVIITSTSAYYVFYI) are Extracellular-facing. Asn-894 and Asn-900 each carry an N-linked (GlcNAc...) asparagine glycan. Residues 919-939 (YVGVADTLLALGFFRGLPLVH) traverse the membrane as a discontinuously helical segment. Residues 940–990 (TLITVSKILHHKMLHSVLQAPMSTLNALKAGGILNRFSKDIAILDDLLPLT) lie on the Cytoplasmic side of the membrane. A helical transmembrane segment spans residues 991-1011 (IFDFIQLLLIVIGAVAVVSVL). At 1012-1013 (QP) the chain is on the extracellular side. A helical transmembrane segment spans residues 1014-1034 (YIFLATVPVIVTFIILRAYFL). Residues 1035 to 1095 (HTSQQLKQLE…TANWFLYLST (61 aa)) lie on the Cytoplasmic side of the membrane. Residues 1096–1116 (LRWFQMRIEMVFVIFFIVVTF) traverse the membrane as a helical segment. Topologically, residues 1117 to 1130 (ISILTTGEGEGQVG) are extracellular. Residues 1131–1151 (IILTLAMNIMGTLQWAVNSSI) traverse the membrane as a helical segment. Over 1152-1481 (DVDSLMRSVS…TEEEVQDTRL (330 aa)) the chain is Cytoplasmic. Positions 1211-1444 (MTVKDLTARY…KSLFRQAISP (234 aa)) constitute an ABC transporter 2 domain. ATP-binding positions include Tyr-1220 and 1245–1252 (GRTGSGKS). The tract at residues 1387–1481 (RTLKQAFADC…TEEEVQDTRL (95 aa)) is interaction with GORASP2. Cys-1396 carries the S-palmitoyl cysteine lipid modification. Ser-1445 and Ser-1457 each carry phosphoserine. The disordered stretch occupies residues 1449-1481 (KLFPRRNSSKHKSRPPITALKEETEEEVQDTRL). Residues 1450-1462 (LFPRRNSSKHKSR) are compositionally biased toward basic residues. Residues 1471–1481 (ETEEEVQDTRL) show a composition bias toward acidic residues. Positions 1479-1481 (TRL) match the PDZ-binding motif.

The protein belongs to the ABC transporter superfamily. ABCC family. CFTR transporter (TC 3.A.1.202) subfamily. As to quaternary structure, monomer; does not require oligomerization for channel activity. May form oligomers in the membrane. Interacts with SLC26A3, SLC26A6 and NHERF1. Interacts with SHANK2. Interacts with MYO6. Interacts (via C-terminus) with GOPC (via PDZ domain); this promotes CFTR internalization and thereby decreases channel activity. Interacts with SLC4A7 through NHERF1. Found in a complex with MYO5B and RAB11A. Interacts with ANO1. Interacts with SLC26A8. Interacts with AHCYL1; the interaction increases CFTR activity. Interacts with CSE1L. The core-glycosylated form interacts with GORASP2 (via PDZ GRASP-type 1 domain) in respone to ER stress. Interacts with MARCHF2; the interaction leads to CFTR ubiqtuitination and degradation. Interacts with ADGRG2. Post-translationally, N-glycosylated. In terms of processing, phosphorylated; cAMP treatment promotes phosphorylation and activates the channel. Dephosphorylation decreases the ATPase activity (in vitro). Phosphorylation at PKA sites activates the channel. Phosphorylation at PKC sites enhances the response to phosphorylation by PKA. Phosphorylated by AMPK; this inhibits channel activity. Ubiquitinated, leading to its degradation in the lysosome. Deubiquitination by USP10 in early endosomes enhances its endocytic recycling to the cell membrane. Ubiquitinated by RNF185 during ER stress. Ubiquitinated by MARCHF2.

The protein resides in the apical cell membrane. It localises to the early endosome membrane. Its subcellular location is the cell membrane. The protein localises to the recycling endosome membrane. It is found in the endoplasmic reticulum membrane. The protein resides in the nucleus. It catalyses the reaction ATP + H2O + closed Cl(-) channel = ADP + phosphate + open Cl(-) channel.. The enzyme catalyses chloride(in) = chloride(out). The catalysed reaction is hydrogencarbonate(in) = hydrogencarbonate(out). It carries out the reaction ATP + H2O = ADP + phosphate + H(+). In terms of biological role, epithelial ion channel that plays an important role in the regulation of epithelial ion and water transport and fluid homeostasis. Mediates the transport of chloride ions across the cell membrane. Possesses an intrinsic ATPase activity and utilizes ATP to gate its channel; the passive flow of anions through the channel is gated by cycles of ATP binding and hydrolysis by the ATP-binding domains. The ion channel is also permeable to HCO(3)(-); selectivity depends on the extracellular chloride concentration. Exerts its function also by modulating the activity of other ion channels and transporters. Contributes to the regulation of the pH and the ion content of the epithelial fluid layer. Modulates the activity of the epithelial sodium channel (ENaC) complex, in part by regulating the cell surface expression of the ENaC complex. May regulate bicarbonate secretion and salvage in epithelial cells by regulating the transporter SLC4A7. Can inhibit the chloride channel activity of ANO1. Plays a role in the chloride and bicarbonate homeostasis during sperm epididymal maturation and capacitation. This chain is Cystic fibrosis transmembrane conductance regulator, found in Microcebus murinus (Gray mouse lemur).